The primary structure comprises 62 residues: Photosystem II reaction center protein Z (62 aa).

The next 2 helical transmembrane spans lie at 8 to 28 (ALFA…VAFA) and 41 to 61 (FSGA…NSFI).

Belongs to the PsbZ family. In terms of assembly, PSII is composed of 1 copy each of membrane proteins PsbA, PsbB, PsbC, PsbD, PsbE, PsbF, PsbH, PsbI, PsbJ, PsbK, PsbL, PsbM, PsbT, PsbY, PsbZ, Psb30/Ycf12, at least 3 peripheral proteins of the oxygen-evolving complex and a large number of cofactors. It forms dimeric complexes.

The protein resides in the plastid. It localises to the chloroplast thylakoid membrane. Functionally, may control the interaction of photosystem II (PSII) cores with the light-harvesting antenna, regulates electron flow through the 2 photosystem reaction centers. PSII is a light-driven water plastoquinone oxidoreductase, using light energy to abstract electrons from H(2)O, generating a proton gradient subsequently used for ATP formation. In Adiantum capillus-veneris (Maidenhair fern), this protein is Photosystem II reaction center protein Z.